The chain runs to 819 residues: Nonribosomal peptide synthetase 9 (819 aa).

The segment at 202–591 (LQAPTQHAVR…GRKDTQAKIR (390 aa)) is adenylation (A) domain. The 77-residue stretch at 722 to 798 (QPRNERERLI…SLAEFLSSSS (77 aa)) folds into the Carrier domain. An O-(pantetheine 4'-phosphoryl)serine modification is found at serine 759.

Belongs to the NRP synthetase family.

It participates in secondary metabolite biosynthesis. Nonribosomal peptide synthetase; part of the Fg3_54/C64 gene cluster that mediates the biosynthesis of the octapeptide fusaoctaxin A, a virulence factor that is required for cell-to-cell invasiveness of plant host. The 2 nonribosomal peptide synthetases NRPS9 and NRPS5 form an assembly line which likely utilizes GABA as a starter unit (loaded on the unique module M1 of NRPS9) and sequentially incorporates seven extender units composed of the residues L-Ala, L-allo-Ile, L-Ser, L-Val, L-Ser, L-Leu and L-Leu, respectively. During the process, each of the residues that are tethered on modules M3-M7 of NRPS5 containing an E domain can undergo an epimerization reaction to produce a D-configuration before the transpeptidation reaction occurs. The elongation of the peptidyl chain might be terminated by module M8-mediated L-Leu incorporation, followed by R domain-catalyzed 4 electron reduction to release the resulting octapeptide from the assembly line as an alcohol. Fusaoctaxin A is cleaved by the cluster specific ABC transporter FGM5 to the pentapeptide fusapentaxin A and the tripeptide fusatrixin A. The other enzymes from the cluster, FGM1, FGM2, FGM3 and FGM9 seem not to be involved in the biosynthesis of fusaoctaxin A and their functions have still to be determined. The sequence is that of Nonribosomal peptide synthetase 9 from Gibberella zeae (strain ATCC MYA-4620 / CBS 123657 / FGSC 9075 / NRRL 31084 / PH-1) (Wheat head blight fungus).